The following is a 778-amino-acid chain: ATP synthase subunit beta (778 aa).

The tract at residues 1–289 (MKENNKTIEA…IDIYEENEDL (289 aa)) is unknown. An ATP synthase subunit beta region spans residues 290–778 (MKLNTLKSDK…KPLNSENKSN (489 aa)). 447–454 (GGAGVGKT) provides a ligand contact to ATP.

The protein belongs to the ATPase alpha/beta chains family. As to quaternary structure, F-type ATPases have 2 components, CF(1) - the catalytic core - and CF(0) - the membrane proton channel. CF(1) has five subunits: alpha(3), beta(3), gamma(1), delta(1), epsilon(1). CF(0) has three main subunits: a(1), b(2) and c(9-12). The alpha and beta chains form an alternating ring which encloses part of the gamma chain. CF(1) is attached to CF(0) by a central stalk formed by the gamma and epsilon chains, while a peripheral stalk is formed by the delta and b chains.

The protein localises to the cell membrane. The catalysed reaction is ATP + H2O + 4 H(+)(in) = ADP + phosphate + 5 H(+)(out). Functionally, produces ATP from ADP in the presence of a proton gradient across the membrane. The catalytic sites are hosted primarily by the beta subunits. This chain is ATP synthase subunit beta (atpD), found in Malacoplasma penetrans (strain HF-2) (Mycoplasma penetrans).